Consider the following 25-residue polypeptide: Alanine racemase (25 aa).

Belongs to the alanine racemase family. In terms of assembly, homodimer. Requires pyridoxal 5'-phosphate as cofactor.

The enzyme catalyses L-alanine = D-alanine. It participates in amino-acid biosynthesis; D-alanine biosynthesis; D-alanine from L-alanine: step 1/1. In terms of biological role, catalyzes the interconversion of L-alanine and D-alanine. The sequence is that of Alanine racemase from Pseudomonas fluorescens.